Reading from the N-terminus, the 260-residue chain is NH(3)-dependent NAD(+) synthetase (260 aa).

31-38 lines the ATP pocket; sequence GLSGGLDS. Asp37 is a binding site for Mg(2+). Arg112 lines the deamido-NAD(+) pocket. Thr132 contributes to the ATP binding site. Glu137 is a Mg(2+) binding site. Residues Lys161 and Ser183 each coordinate ATP.

The protein belongs to the NAD synthetase family. Homodimer.

It catalyses the reaction deamido-NAD(+) + NH4(+) + ATP = AMP + diphosphate + NAD(+) + H(+). Its pathway is cofactor biosynthesis; NAD(+) biosynthesis; NAD(+) from deamido-NAD(+) (ammonia route): step 1/1. In terms of biological role, catalyzes the ATP-dependent amidation of deamido-NAD to form NAD. Uses ammonia as a nitrogen source. This Helicobacter pylori (strain ATCC 700392 / 26695) (Campylobacter pylori) protein is NH(3)-dependent NAD(+) synthetase.